The following is a 493-amino-acid chain: Cytochrome c-552 (493 aa).

Residues 1–25 (MEKKLKSWQGWLLFCGAMAVVFVLG) form the signal peptide. Residue His-116 coordinates heme c. Heme is bound by residues Cys-144, Cys-147, and Lys-148. Heme c-binding residues include Cys-182, Cys-185, His-186, Cys-224, Cys-227, and His-228. Positions 230, 231, 276, and 278 each coordinate Ca(2+). Tyr-231 contributes to the substrate binding site. His-279 provides a ligand contact to substrate. Heme c-binding residues include His-290, Cys-297, Cys-300, His-301, His-315, Cys-328, Cys-331, His-332, and His-407.

This sequence belongs to the cytochrome c-552 family. The cofactor is Ca(2+). Heme c is required as a cofactor.

It is found in the periplasm. The catalysed reaction is 6 Fe(III)-[cytochrome c] + NH4(+) + 2 H2O = 6 Fe(II)-[cytochrome c] + nitrite + 8 H(+). Its pathway is nitrogen metabolism; nitrate reduction (assimilation). Its function is as follows. Catalyzes the reduction of nitrite to ammonia, consuming six electrons in the process. The polypeptide is Cytochrome c-552 (Bacteroides fragilis (strain YCH46)).